The sequence spans 398 residues: Unsaturated chondroitin disaccharide hydrolase (398 aa).

Aspartate 115 acts as the Nucleophile in catalysis. Residues aspartate 115, aspartate 175, glycine 233, threonine 235, arginine 247, tryptophan 251, serine 365, and serine 368 each coordinate substrate. Aspartate 175 acts as the Proton donor in catalysis.

The protein belongs to the glycosyl hydrolase 88 family. Monomer.

It carries out the reaction beta-D-4-deoxy-Delta(4)-GlcpA-(1-&gt;3)-beta-D-GalpNAc6S + H2O = N-acetyl-beta-D-galactosamine 6-sulfate + 5-dehydro-4-deoxy-D-glucuronate. Functionally, catalyzes the hydrolysis of unsaturated hyaluronate and chondroitin disaccharides. Also degrades unsaturated heparin disaccharides. Releases 4-deoxy-4,5-didehydro D-glucuronic acid or 4-deoxy-4,5-didehydro L-iduronic acid from chondroitin disaccharides, hyaluronan disaccharides and heparin disaccharides and cleaves both glycosidic (1-&gt;3) and (1-&gt;4) bonds. Prefers sulfated glycosaminoglycans compared to unsulfated glycosaminoglycans. Probably required for mammalian cells invasion through the degradation of extracellular sulfated glycosaminoglycans such as chondroitin and hyaluronan. The protein is Unsaturated chondroitin disaccharide hydrolase of Streptococcus agalactiae serotype III (strain NEM316).